A 635-amino-acid chain; its full sequence is Probable ethylene response sensor 2 (635 aa).

3 helical membrane passes run 24–44 (ISDF…IYFV), 59–79 (FGAF…TFAI), and 94–114 (ATAV…PDLL). Cu cation is bound by residues Cys66 and His70. One can recognise a GAF domain in the interval 159–308 (DRHTILRTTL…VVADQVAVAL (150 aa)). The region spanning 351 to 589 (VMNHEMRTPM…MFFVKLGMPE (239 aa)) is the Histidine kinase domain. A Phosphohistidine; by autocatalysis modification is found at His354.

This sequence belongs to the ethylene receptor family. As to quaternary structure, homodimer. It depends on Cu cation as a cofactor.

The protein localises to the endoplasmic reticulum membrane. The catalysed reaction is ATP + protein L-histidine = ADP + protein N-phospho-L-histidine.. Functionally, ethylene receptor related to bacterial two-component regulators. Acts as a negative regulator of ethylene signaling. May play a role in the regulation of flowering by up-regulating GI (GIGANTEA) and RCN1 and regulate starch accumulation by down-regulating the alpha-amylase AMY3D. This is Probable ethylene response sensor 2 (ERS2) from Oryza sativa subsp. japonica (Rice).